Consider the following 259-residue polypeptide: Small ribosomal subunit protein uS2 (259 aa).

This sequence belongs to the universal ribosomal protein uS2 family.

The chain is Small ribosomal subunit protein uS2 from Streptococcus pneumoniae (strain Hungary19A-6).